The following is a 374-amino-acid chain: Isopentenyl-diphosphate delta-isomerase (374 aa).

13–14 (RK) is a binding site for substrate. Residues 71–73 (GMT), Ser-104, and Asn-132 each bind FMN. Residue 104 to 106 (SQR) coordinates substrate. Residue Gln-171 coordinates substrate. Glu-172 lines the Mg(2+) pocket. FMN is bound by residues Lys-203, Thr-233, 282-284 (GMR), and 303-304 (AL).

This sequence belongs to the IPP isomerase type 2 family. Homooctamer. Dimer of tetramers. FMN is required as a cofactor. It depends on NADPH as a cofactor. Requires Mg(2+) as cofactor.

The protein localises to the cytoplasm. It catalyses the reaction isopentenyl diphosphate = dimethylallyl diphosphate. Involved in the biosynthesis of isoprenoids. Catalyzes the 1,3-allylic rearrangement of the homoallylic substrate isopentenyl (IPP) to its allylic isomer, dimethylallyl diphosphate (DMAPP). This Thermococcus kodakarensis (strain ATCC BAA-918 / JCM 12380 / KOD1) (Pyrococcus kodakaraensis (strain KOD1)) protein is Isopentenyl-diphosphate delta-isomerase.